The following is a 745-amino-acid chain: AMP deaminase 1 (745 aa).

Thr-79 is subject to Phosphothreonine. A Phosphoserine modification is found at Ser-83. Tyr-214 is modified (phosphotyrosine). Zn(2+) contacts are provided by His-301 and His-303. Substrate contacts are provided by residues His-303 and 372 to 377 (KFNDKY). Ser-439 carries the post-translational modification Phosphoserine. His-570 contacts Zn(2+). Glu-573 lines the substrate pocket. Residue His-592 is the Proton acceptor of the active site. Residue Asp-647 participates in Zn(2+) binding. 648-651 (DPMQ) is a substrate binding site.

It belongs to the metallo-dependent hydrolases superfamily. Adenosine and AMP deaminases family. In terms of assembly, homotetramer. Zn(2+) serves as cofactor.

It carries out the reaction AMP + H2O + H(+) = IMP + NH4(+). It participates in purine metabolism; IMP biosynthesis via salvage pathway; IMP from AMP: step 1/1. In terms of biological role, AMP deaminase plays a critical role in energy metabolism. This is AMP deaminase 1 from Mus musculus (Mouse).